A 145-amino-acid polypeptide reads, in one-letter code: Ribosome maturation factor RimP (145 aa).

The protein belongs to the RimP family.

The protein localises to the cytoplasm. Required for maturation of 30S ribosomal subunits. In Borreliella burgdorferi (strain ZS7) (Borrelia burgdorferi), this protein is Ribosome maturation factor RimP.